Consider the following 1025-residue polypeptide: MKFFALFIYRPVATILLSVAITLCGILGFRMLPVAPLPQVDFPVIMVSASLPGASPETMASSVATPLERSLGRIAGVSEMTSSSSLGSTRIILQFDFDRDINGAARDVQAAINAAQSLLPSGMPSRPTYRKANPSDAPIMILTLTSDTYSQGELYDFASTQLAPTISQIDGVGDVDVGGSSLPAVRVGLNPQALFNQGVSLDDVRTAISNANVRKPQGALEDGTHRWQIQTNDELKTAAEYQPLIIHYNNGGAVRLGDVATVTDSVQDVRNAGMTNAKPAILLMIRKLPEANIIQTVDSIRAKLPELQETIPAAIDLQIAQDRSPTIRASLEEVEQTLIISVALVILVVFLFLRSGRATIIPAVAVPVSLIGTFAAMYLCGFSLNNLSLMALTIATGFVVDDAIVVLENIARHLEAGMKPLQAALQGTREVGFTVLSMSLSLVAVFLPLLLMGGLPGRLLREFAVTLSVAIGISLLVSLTLTPMMCGWMLKASKPREQKRLRGFGRMLVALQQGYGKSLKWVLNHTRLVGVVLLGTIALNIWLYISIPKTFFPEQDTGVLMGGIQADQSISFQAMRGKLQDFMKIIRDDPAVDNVTGFTGGSRVNSGMMFITLKPRDERSETAQQIIDRLRVKLAKEPGANLFLMAVQDIRVGGRQSNASYQYTLLSDDLAALREWEPKIRKKLATLPELADVNSDQQDNGAEMNLVYDRDTMARLGIDVQAANSLLNNAFGQRQISTIYQPMNQYKVVMEVDPRYTQDISALEKMFVINNEGKAIPLSYFAKWQPANAPLSVNHQGLSAASTISFNLPTGKSLSDASAAIDRAMTQLGVPSTVRGSFAGTAQVFQETMNSQVILIIAAIATVYIVLGILYESYVHPLTILSTLPSAGVGALLALELFNAPFSLIALIGIMLLIGIVKKNAIMMVDFALEAQRHGNLTPQEAIFQACLLRFRPIMMTTLAALFGALPLVLSGGDGSELRQPLGITIVGGLVMSQLLTLYTTPVVYLFFDRLRLRFSRKPKQTVTE.

12 helical membrane-spanning segments follow: residues 3 to 23 (FFALFIYRPVATILLSVAITL), 333 to 353 (EVEQTLIISVALVILVVFLFL), 360 to 380 (IIPAVAVPVSLIGTFAAMYLC), 387 to 407 (LSLMALTIATGFVVDDAIVVL), 431 to 451 (VGFTVLSMSLSLVAVFLPLLL), 463 to 483 (FAVTLSVAIGISLLVSLTLTP), 528 to 548 (LVGVVLLGTIALNIWLYISIP), 853 to 873 (VILIIAAIATVYIVLGILYES), 875 to 895 (VHPLTILSTLPSAGVGALLAL), 897 to 917 (LFNAPFSLIALIGIMLLIGIV), 953 to 973 (PIMMTTLAALFGALPLVLSGG), and 984 to 1004 (ITIVGGLVMSQLLTLYTTPVV).

This sequence belongs to the resistance-nodulation-cell division (RND) (TC 2.A.6) family. MdtC subfamily. In terms of assembly, part of a tripartite efflux system composed of MdtA, MdtB and MdtC. MdtC forms a heteromultimer with MdtB.

Its subcellular location is the cell inner membrane. Functionally, the MdtABC tripartite complex confers resistance against novobiocin and deoxycholate. This is Multidrug resistance protein MdtC from Escherichia fergusonii (strain ATCC 35469 / DSM 13698 / CCUG 18766 / IAM 14443 / JCM 21226 / LMG 7866 / NBRC 102419 / NCTC 12128 / CDC 0568-73).